Here is a 27-residue protein sequence, read N- to C-terminus: Pregnancy-associated glycoprotein 62 (27 aa).

This sequence belongs to the peptidase A1 family. Post-translationally, glycosylated. As to expression, placenta.

The chain is Pregnancy-associated glycoprotein 62 (PAG62) from Capra hircus (Goat).